A 489-amino-acid chain; its full sequence is Diacylglycerol O-acyltransferase 1 (489 aa).

The disordered stretch occupies residues 1-54; sequence MGDRGGAGGSRRRRTGSRPSIQGGSGPAAAEEEVRDVGAGGDAPVRDTDKDGDV. The Cytoplasmic portion of the chain corresponds to 1-80; the sequence is MGDRGGAGGS…SLFSSDSGFS (80 aa). The segment at 1 to 88 is involved in homomerization; it reads MGDRGGAGGS…FSNYRGILNW (88 aa). The residue at position 20 (S20) is a Phosphoserine. The span at 44 to 53 shows a compositional bias: basic and acidic residues; it reads PVRDTDKDGD. Residues 81-115 traverse the membrane as a helical segment; the sequence is NYRGILNWCVVMLILSNARLFLENLIKYGILVDPI. At 116 to 127 the chain is on the lumenal side; sequence QVVSLFLKDPYS. The interval 116-127 is extracellular loop 1 (EL1); the sequence is QVVSLFLKDPYS. The chain crosses the membrane as a helical span at residues 128–153; that stretch reads WPALCLVIVANIFAVAAFQVEKRLAV. The interval 128–489 is MBOAT fold; it reads WPALCLVIVA…LNREAPAAGT (362 aa). The Cytoplasmic portion of the chain corresponds to 154–158; it reads GALTE. A helical membrane pass occupies residues 159–181; sequence QAGLLLHGVNLATILCFPAAVAF. Over 182–188 the chain is Lumenal; sequence LLESITP. Residues 189-220 form a helical membrane-spanning segment; it reads VGSVLALMVYTILFLKLFSYRDVNLWCRERRA. The Cytoplasmic portion of the chain corresponds to 221 to 274; it reads GAKAKAALAGKKANGGAAQRTVSYPDNLTYRDLYYFLFAPTLCYELNFPRSPRI. An intracellular loop 1 (IL1) region spans residues 225 to 277; it reads KAALAGKKANGGAAQRTVSYPDNLTYRDLYYFLFAPTLCYELNFPRSPRIRKR. The chain crosses the membrane as a helical span at residues 275-309; it reads RKRFLLRRLLEMLFLTQLQVGLIQQWMVPAIQNSM. At 310-316 the chain is on the lumenal side; that stretch reads KPFKDMD. A helical transmembrane segment spans residues 317–354; the sequence is YSRIVERLLKLAVPNHLIWLIFFYWLFHSCLNAVAELM. Residues 355 to 400 lie on the Cytoplasmic side of the membrane; it reads QFGDREFYRDWWNSESITYFWQNWNIPVHKWCIRHFYKPMLRRGSS. An intracellular loop 2 (IL2) region spans residues 355–400; it reads QFGDREFYRDWWNSESITYFWQNWNIPVHKWCIRHFYKPMLRRGSS. The FYXDWWN motif signature appears at 361–367; sequence FYRDWWN. An acyl-CoA contacts are provided by residues 375 to 383, Y391, and R405; that span reads WQNWNIPVH. The segment at 381-395 is amphipathic helix (AH); the sequence is PVHKWCIRHFYKPML. A helical transmembrane segment spans residues 401-421; it reads KWAARTAVFLASAFFHEYLVS. H416 is a catalytic residue. Topologically, residues 422-429 are lumenal; it reads IPLRMFRL. The helical transmembrane segment at 430 to 448 threads the bilayer; the sequence is WAFTGMMAQIPLAWIVGRF. At 449-450 the chain is on the cytoplasmic side; the sequence is FR. A helical membrane pass occupies residues 451-482; that stretch reads GNYGNAAVWLSLIIGQPVAVLMYVHDYYVLNR. Y478 contacts an acyl-CoA. Residues 483–489 lie on the Lumenal side of the membrane; the sequence is EAPAAGT.

It belongs to the membrane-bound acyltransferase family. Sterol o-acyltransferase subfamily. As to quaternary structure, homodimer or homotetramer; both forms have similar enzymatic activities.

The protein resides in the endoplasmic reticulum membrane. It carries out the reaction an acyl-CoA + a 1,2-diacyl-sn-glycerol = a triacyl-sn-glycerol + CoA. It catalyses the reaction all-trans-retinol + an acyl-CoA = an all-trans-retinyl ester + CoA. The enzyme catalyses 2-(9Z-octadecenoyl)-glycerol + (9Z)-octadecenoyl-CoA = 1,2-di-(9Z-octadecenoyl)-sn-glycerol + CoA. The catalysed reaction is 1,2-di-(9Z-octadecenoyl)-sn-glycerol + (9Z)-octadecenoyl-CoA = 1,2,3-tri-(9Z-octadecenoyl)-glycerol + CoA. It carries out the reaction all-trans-retinol + hexadecanoyl-CoA = all-trans-retinyl hexadecanoate + CoA. It catalyses the reaction 1-O-(9Z-octadecenyl)-glycerol + (9Z)-octadecenoyl-CoA = 1-O-(9Z-octadecyl)-3-(9Z-octadecenoyl)-glycerol + CoA. The enzyme catalyses 1-O-(9Z-octadecyl)-3-(9Z-octadecenoyl)-glycerol + (9Z)-octadecenoyl-CoA = 1-O-(9Z-octadecenyl)-2,3-di-(9Z-octadecenoyl)glycerol + CoA. The catalysed reaction is 1-(9Z-octadecenoyl)-glycerol + (9Z)-octadecenoyl-CoA = 1,2-di-(9Z-octadecenoyl)-glycerol + CoA. It carries out the reaction 1,2-di-(9Z-octadecenoyl)-glycerol + (9Z)-octadecenoate + H(+) = 1,2,3-tri-(9Z-octadecenoyl)-glycerol + H2O. It catalyses the reaction 1-octadecanoyl-2-(5Z,8Z,11Z,14Z-eicosatetraenoyl)-sn-glycerol + (9Z)-octadecenoyl-CoA = 1-octadecanoyl-2-(5Z,8Z,11Z,14Z)-eicosatetraenoyl-3-(9Z)-octadecenoyl-sn-glycerol + CoA. The enzyme catalyses hexadecane-1,2-diol + 2 hexadecanoyl-CoA = 1,2-O,O-dihexadecanoyl-1,2-hexadecanediol + 2 CoA. The catalysed reaction is hexadecane-1,2-diol + hexadecanoyl-CoA = 2-hydroxyhexadecyl hexadecanoate + CoA. It carries out the reaction 2-(9Z-octadecenoyl)-glycerol + hexadecanoyl-CoA = 1-hexadecanoyl-2-(9Z-octadecenoyl)-sn-glycerol + CoA. It catalyses the reaction 1,2-di-(9Z-octadecenoyl)-sn-glycerol + hexadecanoyl-CoA = 1,2-di-(9Z)-octadecenoyl-3-hexadecanoyl-sn-glycerol + CoA. The enzyme catalyses hexadecan-1-ol + hexadecanoyl-CoA = hexadecanyl hexadecanoate + CoA. The catalysed reaction is 13-cis-retinol + hexadecanoyl-CoA = 13-cis-retinyl hexadecanoate + CoA. It carries out the reaction 1,3-di-(9Z-octadecenoyl)-glycerol + (9Z)-octadecenoyl-CoA = 1,2,3-tri-(9Z-octadecenoyl)-glycerol + CoA. It catalyses the reaction 2,3-di-(9Z)-octadecenoyl-sn-glycerol + (9Z)-octadecenoyl-CoA = 1,2,3-tri-(9Z-octadecenoyl)-glycerol + CoA. The protein operates within lipid metabolism; glycerolipid metabolism. In terms of biological role, catalyzes the terminal and only committed step in triacylglycerol synthesis by using diacylglycerol and fatty acyl CoA as substrates. Highly expressed in epithelial cells of the small intestine and its activity is essential for the absorption of dietary fats. In liver, plays a role in esterifying exogenous fatty acids to glycerol, and is required to synthesize fat for storage. Also present in female mammary glands, where it produces fat in the milk. May be involved in VLDL (very low density lipoprotein) assembly. In contrast to DGAT2 it is not essential for survival. Functions as the major acyl-CoA retinol acyltransferase (ARAT) in the skin, where it acts to maintain retinoid homeostasis and prevent retinoid toxicity leading to skin and hair disorders. Exhibits additional acyltransferase activities, includin acyl CoA:monoacylglycerol acyltransferase (MGAT), wax monoester and wax diester synthases. Also able to use 1-monoalkylglycerol (1-MAkG) as an acyl acceptor for the synthesis of monoalkyl-monoacylglycerol (MAMAG). The sequence is that of Diacylglycerol O-acyltransferase 1 (DGAT1) from Bos taurus (Bovine).